The chain runs to 403 residues: Large ribosomal subunit protein uL3 (403 aa).

The segment at 1-38 is disordered; that stretch reads MSHRKFSAPRHGSLGFLPRKRSSRHRGKVKSFPKDDSS. Serine 13 bears the Phosphoserine mark. The span at 18 to 31 shows a compositional bias: basic residues; that stretch reads PRKRSSRHRGKVKS. A Glycyl lysine isopeptide (Lys-Gly) (interchain with G-Cter in SUMO2) cross-link involves residue lysine 39. An N6-acetyllysine modification is found at lysine 136. Glycyl lysine isopeptide (Lys-Gly) (interchain with G-Cter in SUMO2) cross-links involve residues lysine 224 and lysine 226. Position 245 is a tele-methylhistidine (histidine 245). N6-acetyllysine; alternate is present on residues lysine 286 and lysine 294. Residue lysine 286 forms a Glycyl lysine isopeptide (Lys-Gly) (interchain with G-Cter in SUMO2); alternate linkage. Residue lysine 294 forms a Glycyl lysine isopeptide (Lys-Gly) (interchain with G-Cter in SUMO1); alternate linkage. At serine 304 the chain carries Phosphoserine. The residue at position 366 (lysine 366) is an N6-acetyllysine; alternate. Residue lysine 366 forms a Glycyl lysine isopeptide (Lys-Gly) (interchain with G-Cter in SUMO2); alternate linkage. At lysine 373 the chain carries N6-acetyllysine. Glycyl lysine isopeptide (Lys-Gly) (interchain with G-Cter in SUMO2) cross-links involve residues lysine 386, lysine 393, and lysine 399.

Belongs to the universal ribosomal protein uL3 family. As to quaternary structure, component of the large ribosomal subunit. Interacts with DHX33. In terms of processing, constitutively monomethylated at His-245 by METTL18. Methylation at His-245 regulates translation elongation by slowing ribosome traversal on tyrosine codons: slower elongation provides enough time for proper folding of synthesized proteins and prevents cellular aggregation of tyrosine-rich proteins It is not required for incorporation of RPL3 into ribosomes.

It is found in the nucleus. It localises to the nucleolus. Its subcellular location is the cytoplasm. Its function is as follows. Component of the large ribosomal subunit. The ribosome is a large ribonucleoprotein complex responsible for the synthesis of proteins in the cell. The sequence is that of Large ribosomal subunit protein uL3 (RPL3) from Sus scrofa (Pig).